Reading from the N-terminus, the 328-residue chain is MIDFGNFYQQIAKGPLSHWLNTLPSQLSSWQQESLHGKFKLWFNSLEHLPSLTPTTLDLNDSVTARMEPDISEGQREGIEKLLRNLMPWRKGPFSLYGVDINTEWRSDWKWQRVLPHISPLKNRLILDVGCGSGYHLWRMVGEGAMMAVGIDPMQLFLCQFEAVRKLLGDDQRAHVLPLGIEQLPELAAFDTVFSMGVLYHRRSPLDHLWQLKNQLVAGGELVLETLVIEGDENQVLVPGERYAQMRNVYFIPSAAALTTWLEKCGFVDVRVVDVCTTTTQEQRRTDWMITESLAEFLDPEDPSKTVEGYPAPVRAVLVARKPGIYQP.

Carboxy-S-adenosyl-L-methionine-binding positions include Lys91, Trp105, Lys110, Gly130, 181–182, Met196, Tyr200, and Arg315; that span reads IE.

This sequence belongs to the class I-like SAM-binding methyltransferase superfamily. CmoB family. In terms of assembly, homotetramer.

The enzyme catalyses carboxy-S-adenosyl-L-methionine + 5-hydroxyuridine(34) in tRNA = 5-carboxymethoxyuridine(34) in tRNA + S-adenosyl-L-homocysteine + H(+). Its function is as follows. Catalyzes carboxymethyl transfer from carboxy-S-adenosyl-L-methionine (Cx-SAM) to 5-hydroxyuridine (ho5U) to form 5-carboxymethoxyuridine (cmo5U) at position 34 in tRNAs. This chain is tRNA U34 carboxymethyltransferase, found in Pectobacterium carotovorum subsp. carotovorum (strain PC1).